The following is a 166-amino-acid chain: Urease accessory protein UreE 2 (166 aa).

The disordered stretch occupies residues 135–154; it reads EHGAYGGGHHHSRAGEEDFN.

Belongs to the UreE family.

The protein resides in the cytoplasm. In terms of biological role, involved in urease metallocenter assembly. Binds nickel. Probably functions as a nickel donor during metallocenter assembly. The chain is Urease accessory protein UreE 2 from Pseudomonas syringae pv. syringae (strain B728a).